Here is a 275-residue protein sequence, read N- to C-terminus: Translation initiation factor 2 subunit alpha (275 aa).

An S1 motif domain is found at 12-83 (GEFVIATVKS…NKGHIDLSLK (72 aa)).

This sequence belongs to the eIF-2-alpha family. In terms of assembly, heterotrimer composed of an alpha, a beta and a gamma chain.

Functionally, eIF-2 functions in the early steps of protein synthesis by forming a ternary complex with GTP and initiator tRNA. The polypeptide is Translation initiation factor 2 subunit alpha (Thermococcus onnurineus (strain NA1)).